The following is a 136-amino-acid chain: Active regulator of SIRT1 (136 aa).

The residue at position 7 (Arg7) is a Citrulline. The segment at 13-58 (LAASEAPRDPPGQAKPRGAPVKRPRKTKAIQAQKLRNSAKGKVPKS) is disordered. Ser84 carries the post-translational modification Phosphoserine.

Belongs to the AROS family. In terms of assembly, part of the small subunit (SSU) processome, composed of more than 70 proteins and the RNA chaperone small nucleolar RNA (snoRNA) U3. Interacts with RPS19; the interaction is direct and mediates the integration of RPS19 in state post-A1. Interacts with SIRT1. In terms of processing, citrullinated by PADI4. In terms of tissue distribution, widely expressed (at protein level).

The protein localises to the nucleus. Its subcellular location is the nucleolus. Part of the small subunit (SSU) processome, first precursor of the small eukaryotic ribosomal subunit. During the assembly of the SSU processome in the nucleolus, many ribosome biogenesis factors, an RNA chaperone and ribosomal proteins associate with the nascent pre-rRNA and work in concert to generate RNA folding, modifications, rearrangements and cleavage as well as targeted degradation of pre-ribosomal RNA by the RNA exosome. Acts as a chaperone that specifically mediates the integration of RPS19 in state post-A1. Direct regulator of SIRT1. Enhances SIRT1-mediated deacetylation of p53/TP53, thereby participating in inhibition of p53/TP53-mediated transcriptional activity. In Homo sapiens (Human), this protein is Active regulator of SIRT1.